The chain runs to 600 residues: Aspartate--tRNA(Asp/Asn) ligase (600 aa).

E175 is an L-aspartate binding site. The tract at residues 199–202 (QLFK) is aspartate. Position 221 (R221) interacts with L-aspartate. ATP contacts are provided by residues 221 to 223 (RDE) and Q230. Residue H453 coordinates L-aspartate. E487 contacts ATP. Residue R494 coordinates L-aspartate. 539–542 (GWDR) provides a ligand contact to ATP. The segment at 578–600 (AAQRKESGIDFKPKKGPQGQKEK) is disordered. Over residues 580-590 (QRKESGIDFKP) the composition is skewed to basic and acidic residues.

This sequence belongs to the class-II aminoacyl-tRNA synthetase family. Type 1 subfamily. In terms of assembly, homodimer.

It localises to the cytoplasm. It catalyses the reaction tRNA(Asx) + L-aspartate + ATP = L-aspartyl-tRNA(Asx) + AMP + diphosphate. Functionally, aspartyl-tRNA synthetase with relaxed tRNA specificity since it is able to aspartylate not only its cognate tRNA(Asp) but also tRNA(Asn). Reaction proceeds in two steps: L-aspartate is first activated by ATP to form Asp-AMP and then transferred to the acceptor end of tRNA(Asp/Asn). This Corynebacterium jeikeium (strain K411) protein is Aspartate--tRNA(Asp/Asn) ligase.